Consider the following 303-residue polypeptide: Ribosomal protein L11 methyltransferase (303 aa).

Residues Thr-144, Gly-165, Asp-187, and Asn-235 each coordinate S-adenosyl-L-methionine.

It belongs to the methyltransferase superfamily. PrmA family.

The protein resides in the cytoplasm. It catalyses the reaction L-lysyl-[protein] + 3 S-adenosyl-L-methionine = N(6),N(6),N(6)-trimethyl-L-lysyl-[protein] + 3 S-adenosyl-L-homocysteine + 3 H(+). Its function is as follows. Methylates ribosomal protein L11. This chain is Ribosomal protein L11 methyltransferase, found in Prochlorococcus marinus (strain AS9601).